The chain runs to 100 residues: Integration host factor subunit alpha (100 aa).

Belongs to the bacterial histone-like protein family. Heterodimer of an alpha and a beta chain.

In terms of biological role, this protein is one of the two subunits of integration host factor, a specific DNA-binding protein that functions in genetic recombination as well as in transcriptional and translational control. In Erythrobacter litoralis (strain HTCC2594), this protein is Integration host factor subunit alpha.